The chain runs to 269 residues: Phosphate import ATP-binding protein PstB (269 aa).

Residues 14-253 enclose the ABC transporter domain; the sequence is LSLENVSISY…EFNSTKKIFN (240 aa). 46–53 provides a ligand contact to ATP; that stretch reads GPSGCGKS.

It belongs to the ABC transporter superfamily. Phosphate importer (TC 3.A.1.7) family. In terms of assembly, the complex is composed of two ATP-binding proteins (PstB), two transmembrane proteins (PstC and PstA) and a solute-binding protein (PstS).

The protein localises to the cell inner membrane. The enzyme catalyses phosphate(out) + ATP + H2O = ADP + 2 phosphate(in) + H(+). In terms of biological role, part of the ABC transporter complex PstSACB involved in phosphate import. Responsible for energy coupling to the transport system. The sequence is that of Phosphate import ATP-binding protein PstB from Prochlorococcus marinus (strain MIT 9312).